A 200-amino-acid polypeptide reads, in one-letter code: Recombination protein RecR (200 aa).

A C4-type zinc finger spans residues 58–75; sequence CPTCFCLKSHPESVCSFC. One can recognise a Toprim domain in the interval 82 to 177; sequence SILCIVATPK…SVSRLALGLP (96 aa).

The protein belongs to the RecR family.

In terms of biological role, may play a role in DNA repair. It seems to be involved in an RecBC-independent recombinational process of DNA repair. It may act with RecF and RecO. The chain is Recombination protein RecR from Chlamydia abortus (strain DSM 27085 / S26/3) (Chlamydophila abortus).